Consider the following 156-residue polypeptide: Small ribosomal subunit protein uS7 (156 aa).

The protein belongs to the universal ribosomal protein uS7 family. Part of the 30S ribosomal subunit. Contacts proteins S9 and S11.

One of the primary rRNA binding proteins, it binds directly to 16S rRNA where it nucleates assembly of the head domain of the 30S subunit. Is located at the subunit interface close to the decoding center, probably blocks exit of the E-site tRNA. In Rhizobium etli (strain ATCC 51251 / DSM 11541 / JCM 21823 / NBRC 15573 / CFN 42), this protein is Small ribosomal subunit protein uS7.